The primary structure comprises 417 residues: D-inositol 3-phosphate glycosyltransferase (417 aa).

Histidine 15 is a 1D-myo-inositol 3-phosphate binding site. UDP-N-acetyl-alpha-D-glucosamine contacts are provided by residues 21–22 and glycine 29; that span reads QP. Residues 26 to 31, lysine 84, tyrosine 117, threonine 141, and arginine 161 contribute to the 1D-myo-inositol 3-phosphate site; that span reads DAGGMN. Residues arginine 241, lysine 246, and valine 299 each coordinate UDP-N-acetyl-alpha-D-glucosamine. Positions 308, 309, and 311 each coordinate Mg(2+). Positions 321 and 329 each coordinate UDP-N-acetyl-alpha-D-glucosamine. Threonine 335 serves as a coordination point for Mg(2+).

Belongs to the glycosyltransferase group 1 family. MshA subfamily. In terms of assembly, homodimer.

It carries out the reaction 1D-myo-inositol 3-phosphate + UDP-N-acetyl-alpha-D-glucosamine = 1D-myo-inositol 2-acetamido-2-deoxy-alpha-D-glucopyranoside 3-phosphate + UDP + H(+). Its function is as follows. Catalyzes the transfer of a N-acetyl-glucosamine moiety to 1D-myo-inositol 3-phosphate to produce 1D-myo-inositol 2-acetamido-2-deoxy-glucopyranoside 3-phosphate in the mycothiol biosynthesis pathway. This Xylanimonas cellulosilytica (strain DSM 15894 / JCM 12276 / CECT 5975 / KCTC 9989 / LMG 20990 / NBRC 107835 / XIL07) protein is D-inositol 3-phosphate glycosyltransferase.